Consider the following 433-residue polypeptide: 23S rRNA (uracil(1939)-C(5))-methyltransferase RlmD (433 aa).

Residues 1–53 form the TRAM domain; the sequence is MPTAVIESLDHEGRGIARVEGKAVFIEGGLPGETVEYRVLRSKPNYEQAEATR. Positions 66, 72, 75, and 154 each coordinate [4Fe-4S] cluster. Residues Gln263, Phe292, Asn297, Glu313, Asn341, and Asp362 each coordinate S-adenosyl-L-methionine. Cys389 acts as the Nucleophile in catalysis.

This sequence belongs to the class I-like SAM-binding methyltransferase superfamily. RNA M5U methyltransferase family. RlmD subfamily.

It catalyses the reaction uridine(1939) in 23S rRNA + S-adenosyl-L-methionine = 5-methyluridine(1939) in 23S rRNA + S-adenosyl-L-homocysteine + H(+). Catalyzes the formation of 5-methyl-uridine at position 1939 (m5U1939) in 23S rRNA. This is 23S rRNA (uracil(1939)-C(5))-methyltransferase RlmD from Azoarcus sp. (strain BH72).